A 588-amino-acid polypeptide reads, in one-letter code: Neopullulanase (588 aa).

Residues asparagine 147, asparagine 149, serine 153, glycine 172, and aspartate 174 each coordinate Ca(2+). Histidine 247 and arginine 326 together coordinate substrate. Aspartate 328 (nucleophile) is an active-site residue. Glutamate 357 (proton donor) is an active-site residue. Residues 423-424, aspartate 468, and arginine 472 each bind substrate; that span reads HD.

The protein belongs to the glycosyl hydrolase 13 family. As to quaternary structure, homodimer. Ca(2+) serves as cofactor.

The enzyme catalyses Hydrolysis of pullulan to panose (6-alpha-D-glucosylmaltose).. Functionally, hydrolyzes pullulan efficiently but only a small amount of starch. Endohydrolysis of 1,4-alpha-glucosidic linkages in pullulan to form panose. Also cleaves (1-6)-alpha-glucosidic linkages to form maltotriose. This chain is Neopullulanase (nplT), found in Geobacillus stearothermophilus (Bacillus stearothermophilus).